Consider the following 816-residue polypeptide: H(+)/Cl(-) exchange transporter 5 (816 aa).

Over 1–124 the chain is Cytoplasmic; sequence MAMWQGAMDN…WALIHSVSDA (124 aa). The next 2 membrane-spanning stretches (helical) occupy residues 125-162 and 208-231; these read FSGWLLMLLIGLLSGSLAGLIDISAHWMTDLKEGICTG and VNYFMYVLWALLFAFLAVSLVKAF. The Selectivity filter part_1 motif lies at 237–241; that stretch reads GSGIP. Serine 238 contributes to the chloride binding site. The segment at residues 240 to 247 is an intramembrane region (helical); sequence IPEIKTIL. The next 2 membrane-spanning stretches (helical) occupy residues 256–275 and 281–300; these read LGKWTLVIKTITLVLAVSSG and EGPLVHVACCCGNILCHCFN. The Selectivity filter part_2 signature appears at 279–283; the sequence is GKEGP. 2 intramembrane regions (helical) span residues 312–324 and 328–336; these read VLSAAAAAGVSVA and PIGGVLFSL. 5 consecutive transmembrane segments (helical) span residues 348–366, 389–414, 422–442, 498–518, and 523–542; these read LWRSFFAALVAAFTLRSIN, LVPFIVLGIFGGLWGALFIRTNIAWC, LGKYPVVEVLIVTAITAILAF, MWQLALTLILKIVITIFTFGM, and GLFIPSMAVGAIAGRLLGVG. The Selectivity filter part_3 signature appears at 523 to 527; the sequence is GLFIP. Phenylalanine 525 serves as a coordination point for chloride. The helical intramembrane region spans 570-584; that stretch reads GLYAMVGAAACLGGV. The note=Loop between two helices intramembrane region spans 585-587; the sequence is TRM. The helical intramembrane region spans 588–599; sequence TVSLVVIMFELT. The segment at residues 600–604 is an intramembrane region (note=Loop between two helices); it reads GGLEY. The helical transmembrane segment at 605-622 threads the bilayer; sequence IVPLMAAAMTSKWVADAL. The Cytoplasmic portion of the chain corresponds to 623–816; sequence GREGIYDAHI…NQDPESILFN (194 aa). Tyrosine 628 provides a ligand contact to chloride. 2 consecutive CBS domains span residues 656-720 and 752-811; these read MKPR…ARKK and ILDL…QDPE. Residues threonine 666, 687–689, and 794–797 contribute to the ATP site; these read YSG and TKKD.

Belongs to the chloride channel (TC 2.A.49) family. ClC-5/CLCN5 subfamily. In terms of assembly, interacts with NEDD4 and NEDD4L. Post-translationally, ubiquitinated by NEDD4L in the presence of albumin; which promotes endocytosis and proteasomal degradation. In terms of tissue distribution, kidney specific.

It localises to the golgi apparatus membrane. It is found in the endosome membrane. The protein localises to the cell membrane. It carries out the reaction 2 chloride(in) + H(+)(out) = 2 chloride(out) + H(+)(in). Functionally, proton-coupled chloride transporter. Functions as antiport system and exchanges chloride ions against protons. Important for normal acidification of the endosome lumen. May play an important role in renal tubular function. The CLC channel family contains both chloride channels and proton-coupled anion transporters that exchange chloride or another anion for protons. The absence of conserved gating glutamate residues is typical for family members that function as channels. The chain is H(+)/Cl(-) exchange transporter 5 (Clcn5) from Rattus norvegicus (Rat).